The primary structure comprises 304 residues: tRNA dimethylallyltransferase (304 aa).

10–17 (GPTASGKT) is an ATP binding site. Residue 12-17 (TASGKT) participates in substrate binding. Interaction with substrate tRNA regions lie at residues 35 to 38 (DSAL), 159 to 163 (QRLSR), and 240 to 245 (RCVGYR).

This sequence belongs to the IPP transferase family. Monomer. Mg(2+) serves as cofactor.

It catalyses the reaction adenosine(37) in tRNA + dimethylallyl diphosphate = N(6)-dimethylallyladenosine(37) in tRNA + diphosphate. In terms of biological role, catalyzes the transfer of a dimethylallyl group onto the adenine at position 37 in tRNAs that read codons beginning with uridine, leading to the formation of N6-(dimethylallyl)adenosine (i(6)A). The polypeptide is tRNA dimethylallyltransferase (Shewanella sp. (strain W3-18-1)).